Reading from the N-terminus, the 378-residue chain is Outer membrane protein (378 aa).

A signal peptide spans 1-22 (MRLRTALLATTLMAAAPVAANA). Residues 258 to 378 (PPAPTPARTY…QNRRVEIILH (121 aa)) enclose the OmpA-like domain.

The protein resides in the cell outer membrane. Its function is as follows. Growth enhancer. The sequence is that of Outer membrane protein from Gluconacetobacter diazotrophicus (strain ATCC 49037 / DSM 5601 / CCUG 37298 / CIP 103539 / LMG 7603 / PAl5).